The chain runs to 557 residues: 2-succinyl-5-enolpyruvyl-6-hydroxy-3-cyclohexene-1-carboxylate synthase (557 aa).

The protein belongs to the TPP enzyme family. MenD subfamily. In terms of assembly, homodimer. Mg(2+) serves as cofactor. Requires Mn(2+) as cofactor. It depends on thiamine diphosphate as a cofactor.

The catalysed reaction is isochorismate + 2-oxoglutarate + H(+) = 5-enolpyruvoyl-6-hydroxy-2-succinyl-cyclohex-3-ene-1-carboxylate + CO2. The protein operates within quinol/quinone metabolism; 1,4-dihydroxy-2-naphthoate biosynthesis; 1,4-dihydroxy-2-naphthoate from chorismate: step 2/7. It participates in quinol/quinone metabolism; menaquinone biosynthesis. Catalyzes the thiamine diphosphate-dependent decarboxylation of 2-oxoglutarate and the subsequent addition of the resulting succinic semialdehyde-thiamine pyrophosphate anion to isochorismate to yield 2-succinyl-5-enolpyruvyl-6-hydroxy-3-cyclohexene-1-carboxylate (SEPHCHC). In Staphylococcus aureus (strain bovine RF122 / ET3-1), this protein is 2-succinyl-5-enolpyruvyl-6-hydroxy-3-cyclohexene-1-carboxylate synthase.